The following is a 243-amino-acid chain: Transcription factor TFIIS homolog (243 aa).

In terms of domain architecture, TFIIS central spans 77–201 (MRDIIQMMFF…SQQKVAEKTS (125 aa)). A TFIIS-type zinc finger spans residues 202–242 (QLYKCPNCKQRMCTYREVQTRALDEPSTIFCTCKKCGHEFI). Zn(2+) is bound by residues Cys-206, Cys-209, Cys-234, and Cys-237.

The protein belongs to the TFS-II family.

In terms of biological role, putative initiation factor. Necessary for efficient transcription elongation past template-encoded arresting sites. This is Transcription factor TFIIS homolog from Ornithodoros (relapsing fever ticks).